A 210-amino-acid chain; its full sequence is 23.6 kDa heat shock protein, mitochondrial (210 aa).

A mitochondrion-targeting transit peptide spans 1–31; sequence MASALALKRLLSSSIAPRSRSVLRPAVSSRL. One can recognise a sHSP domain in the interval 100-210; it reads MGASGARRGW…RNDVRQIEIN (111 aa). The segment at 145 to 165 is disordered; it reads GEGKNEEDGGEEGESGNRRFT.

It belongs to the small heat shock protein (HSP20) family. In terms of assembly, may form oligomeric structures.

Its subcellular location is the mitochondrion. In Arabidopsis thaliana (Mouse-ear cress), this protein is 23.6 kDa heat shock protein, mitochondrial (HSP23.6).